Here is a 737-residue protein sequence, read N- to C-terminus: NAD(P)H-quinone oxidoreductase subunit 5, chloroplastic (737 aa).

The next 16 helical transmembrane spans lie at 9-29 (WIIP…LILF), 40-60 (WAFQ…YLSI), 89-109 (IDPL…MVLI), 125-145 (FAYM…SNLI), 147-167 (IYIF…FWFT), 185-205 (GDFG…SFEF), 219-239 (NELN…GAVA), 258-278 (TPIS…FLVA), 286-306 (VIPY…LLGA), 327-347 (LGYM…FHLI), 354-374 (ALLF…VGYS), 396-416 (ITFL…CFWS), 425-445 (WLYS…TAFY), 543-563 (LFPI…GIPF), 602-622 (VVSV…YKPI), and 717-737 (SYLF…YLLF).

It belongs to the complex I subunit 5 family. In terms of assembly, NDH is composed of at least 16 different subunits, 5 of which are encoded in the nucleus.

Its subcellular location is the plastid. It localises to the chloroplast thylakoid membrane. The catalysed reaction is a plastoquinone + NADH + (n+1) H(+)(in) = a plastoquinol + NAD(+) + n H(+)(out). It carries out the reaction a plastoquinone + NADPH + (n+1) H(+)(in) = a plastoquinol + NADP(+) + n H(+)(out). In terms of biological role, NDH shuttles electrons from NAD(P)H:plastoquinone, via FMN and iron-sulfur (Fe-S) centers, to quinones in the photosynthetic chain and possibly in a chloroplast respiratory chain. The immediate electron acceptor for the enzyme in this species is believed to be plastoquinone. Couples the redox reaction to proton translocation, and thus conserves the redox energy in a proton gradient. This is NAD(P)H-quinone oxidoreductase subunit 5, chloroplastic (ndhF) from Solanum lycopersicum (Tomato).